The sequence spans 657 residues: Glycogen debranching enzyme (657 aa).

The Nucleophile role is filled by Asp336. The active-site Proton donor is Glu371. The disordered stretch occupies residues 460–479; sequence ANGEENRDGTNNNYSNNHGK.

This sequence belongs to the glycosyl hydrolase 13 family.

The enzyme catalyses Hydrolysis of (1-&gt;6)-alpha-D-glucosidic linkages to branches with degrees of polymerization of three or four glucose residues in limit dextrin.. Its pathway is glycan degradation; glycogen degradation. In terms of biological role, removes maltotriose and maltotetraose chains that are attached by 1,6-alpha-linkage to the limit dextrin main chain, generating a debranched limit dextrin. This Escherichia coli O1:K1 / APEC protein is Glycogen debranching enzyme.